The chain runs to 190 residues: Transcription factor bHLH162 (190 aa).

Polar residues predominate over residues 1 to 12 (MEPSHSNTGQSR). The segment at 1–21 (MEPSHSNTGQSRSVDRKTVEK) is disordered. One can recognise a bHLH domain in the interval 11–63 (SRSVDRKTVEKNRRMQMKSLYSELISLLPHHSSTEPLTLPDQLDEAANYIKKL).

The protein belongs to the bHLH protein family.

It localises to the nucleus. The protein is Transcription factor bHLH162 of Arabidopsis thaliana (Mouse-ear cress).